A 341-amino-acid polypeptide reads, in one-letter code: L-threonine 3-dehydrogenase (341 aa).

Cys-38 serves as a coordination point for Zn(2+). Catalysis depends on charge relay system residues Thr-40 and His-43. 6 residues coordinate Zn(2+): His-63, Glu-64, Cys-93, Cys-96, Cys-99, and Cys-107. Residues Ile-175, Asp-195, Arg-200, 262 to 264 (LGI), and 286 to 287 (IY) contribute to the NAD(+) site.

It belongs to the zinc-containing alcohol dehydrogenase family. Homotetramer. Zn(2+) is required as a cofactor.

It localises to the cytoplasm. It carries out the reaction L-threonine + NAD(+) = (2S)-2-amino-3-oxobutanoate + NADH + H(+). Its pathway is amino-acid degradation; L-threonine degradation via oxydo-reductase pathway; glycine from L-threonine: step 1/2. Catalyzes the NAD(+)-dependent oxidation of L-threonine to 2-amino-3-ketobutyrate. The polypeptide is L-threonine 3-dehydrogenase (Escherichia coli O157:H7).